We begin with the raw amino-acid sequence, 339 residues long: Large ribosomal subunit protein uL29 (339 aa).

A large ribosomal subunit protein uL29 region spans residues 1–96; the sequence is MNDLTKKSVE…FAKQRKAKIE (96 aa). Residues 97–339 are unknown; sequence QMMAEQQAAE…KTTKKGTGKK (243 aa). 2 disordered regions span residues 129–254 and 311–339; these read VVST…VPTK and KENRDKILTASKTTKKADDKTTKKGTGKK. The span at 145-156 shows a compositional bias: low complexity; the sequence is APVAAKKPAAAK. Over residues 157–170 the composition is skewed to basic and acidic residues; sequence DFPKQKDVVEEKTA. Over residues 171-182 the composition is skewed to low complexity; sequence TGKPAAPSAKKA. Basic and acidic residues predominate over residues 185–210; the sequence is AKKDVAQETKTDKDAALKALIKEKAA. Positions 217–238 are enriched in low complexity; the sequence is KSKTSTPSGKTTVTVKSVTSAK. Residues 239–248 are compositionally biased toward basic and acidic residues; the sequence is ADIEVPKETS.

This sequence belongs to the universal ribosomal protein uL29 family. Forms homomultimers. Part of the ribosome; radioactive IRS binds to purified ribosomes.

Functionally, specifically binds a DNA inverted repeat sequence (IRS) found downstream of rpsB in one of the ribosomal subunit operons (for genes rpsB, tsf, and unknown gene x). Might be involved in regulation of transcription of the rpsB operon; the IRS may be a control element to attenuate transcription. The protein is Large ribosomal subunit protein uL29 of Spiroplasma citri.